Here is a 946-residue protein sequence, read N- to C-terminus: Zinc finger protein rotund (946 aa).

Disordered stretches follow at residues 10–30 and 156–269; these read GPQL…GHSD and FRKP…HNLN. A compositionally biased stretch (polar residues) spans 161–176; the sequence is NNNGYSWSTGNNNEVV. Low complexity predominate over residues 177–188; sequence SHSSNGHTNNHP. 2 stretches are compositionally biased toward polar residues: residues 198–230 and 242–269; these read ASAT…SIKS and TCKS…HNLN. 6 consecutive C2H2-type zinc fingers follow at residues 488–510, 517–539, 545–567, 573–597, 603–625, and 634–656; these read YQCK…TQIH, YKCT…TRIH, YRCE…IRTH, YKCR…SRCH, FKCN…IPKH, and HICQ…MQKH. The tract at residues 683–853 is disordered; sequence GGSANPANGP…TPSAVGPYDA (171 aa). 2 stretches are compositionally biased toward low complexity: residues 739-762 and 770-790; these read HQQQ…QQQQ and HGVP…QQQQ. Positions 813 to 822 are enriched in polar residues; that stretch reads TAPNGSQSNG. The segment covering 828-841 has biased composition (basic and acidic residues); that stretch reads QPHHRMPDPVREDI.

Belongs to the krueppel C2H2-type zinc-finger protein family. In terms of assembly, interacts with nab; which acts as a corepressor. Isoform rn and isoform roe are expressed in non-overlapping domains in the larval imaginal disks. Isoform rn is first expressed during the early third larval instar in the leg, wing, haltere and antennal part of the eye-antennal imaginal disk. It is observed as a ring in the leg and antenna disks and in the presumptive wing pouch and capitellum of wing and haltere disks respectively. In wing disk it is expressed in 3 concentric domains in the wing pouch. In late third instar, expression of isoform rn in the leg disk is no longer evident, but is maintained in the other disks. Isoform roe appears in the third instar and is confined to the eye part of the eye-antennal imaginal disk in a band of 4-6 cells at the morphogenetic furrow. There is no evidence of roe expression in other imaginal disks.

It is found in the nucleus. In terms of biological role, transcription factor involved in imaginal disks development. Isoform rn is required in the wings, antenna, haltere, proboscis and legs disks, while isoform roe is required in the eye disk. Together with nab corepressor, it is involved in the initiation and maintenance of wingless (wg) expression in the wing hinge, by limiting the expression of wg to this compartment. Also required for the epithelial-mesenchymal transition branch of basolateral junctions signaling. The polypeptide is Zinc finger protein rotund (Drosophila melanogaster (Fruit fly)).